A 1124-amino-acid polypeptide reads, in one-letter code: FHF complex subunit HOOK-interacting protein 1B (1124 aa).

Disordered stretches follow at residues 1 to 25 (MSWL…PSSP), 461 to 542 (APSG…QLSD), 577 to 599 (GENP…PSLS), 713 to 732 (KKVK…GMNG), and 838 to 900 (ERVR…PLGQ). The span at 509–532 (ANPSSSGSENAPSSPRGSVSSPLS) shows a compositional bias: low complexity. Positions 583–594 (NSAPLPPPPPTS) are enriched in pro residues. Basic and acidic residues-rich tracts occupy residues 838 to 858 (ERVR…RESR) and 875 to 884 (TEQRSSETKP).

This sequence belongs to the FHIP family. As to quaternary structure, component of the FTS/Hook/FHIP complex (FHF complex), composed of AKTIP/FTS, FHIP1B, and one or more members of the Hook family of proteins HOOK1, HOOK2, and HOOK3. The FHF complex associates with the homotypic vesicular sorting complex (the HOPS complex).

Functionally, component of the FTS/Hook/FHIP complex (FHF complex). The FHF complex may function to promote vesicle trafficking and/or fusion via the homotypic vesicular protein sorting complex (the HOPS complex). FHF complex promotes the distribution of AP-4 complex to the perinuclear area of the cell. This is FHF complex subunit HOOK-interacting protein 1B (fhip1b) from Danio rerio (Zebrafish).